Here is a 644-residue protein sequence, read N- to C-terminus: Protein cueball (644 aa).

Positions 1–26 (MIRIRFGMDVLLVLLLATCLLSPAHG) are cleaved as a signal peptide. Residues 27–531 (TPLEWDFAVT…VCLTPKVWTS (505 aa)) lie on the Extracellular side of the membrane. Asn-82 and Asn-108 each carry an N-linked (GlcNAc...) asparagine glycan. LDL-receptor class B repeat units lie at residues 121–166 (MNLF…DVCR), 167–211 (RKLY…DQLS), and 212–257 (DRLF…TNDA). Residues Asn-175, Asn-190, and Asn-196 are each glycosylated (N-linked (GlcNAc...) asparagine). The N-linked (GlcNAc...) asparagine glycan is linked to Asn-313. 2 EGF-like domains span residues 398–430 (EIRE…FTGE) and 433–471 (EVSV…ARCE). Intrachain disulfides connect Cys-402–Cys-411, Cys-406–Cys-421, Cys-437–Cys-447, Cys-441–Cys-459, and Cys-461–Cys-470. 2 N-linked (GlcNAc...) asparagine glycosylation sites follow: Asn-473 and Asn-508. Residues 532–552 (SVIIILVIGIVSSLLLVAVIV) form a helical membrane-spanning segment. Topologically, residues 553 to 644 (HGIRRLYKPK…LIHNMEDDLY (92 aa)) are cytoplasmic.

It belongs to the cueball family.

It is found in the cell membrane. In terms of biological role, has a role in spermatogenesis and oogenesis. This Drosophila erecta (Fruit fly) protein is Protein cueball.